A 98-amino-acid chain; its full sequence is Prostate and testis expressed protein 3 (98 aa).

The signal sequence occupies residues 1 to 20; sequence MNKHFLLLFSLFYFIVEATS. In terms of domain architecture, UPAR/Ly6 spans 21–97; it reads LKCVTCHLRT…CCNSDFCNFR (77 aa). 4 disulfide bridges follow: cysteine 23/cysteine 50, cysteine 26/cysteine 35, cysteine 42/cysteine 68, and cysteine 72/cysteine 88.

It belongs to the PATE family.

Its subcellular location is the secreted. The polypeptide is Prostate and testis expressed protein 3 (Pate3) (Mus musculus (Mouse)).